The following is a 101-amino-acid chain: Large ribosomal subunit protein uL24 (101 aa).

It belongs to the universal ribosomal protein uL24 family. In terms of assembly, part of the 50S ribosomal subunit.

Functionally, one of two assembly initiator proteins, it binds directly to the 5'-end of the 23S rRNA, where it nucleates assembly of the 50S subunit. In terms of biological role, one of the proteins that surrounds the polypeptide exit tunnel on the outside of the subunit. This chain is Large ribosomal subunit protein uL24, found in Streptococcus pneumoniae (strain ATCC 700669 / Spain 23F-1).